Here is a 309-residue protein sequence, read N- to C-terminus: GTP cyclohydrolase MptA (309 aa).

This sequence belongs to the GTP cyclohydrolase IV family. In terms of assembly, homodimer. Fe(2+) serves as cofactor.

The catalysed reaction is GTP + H2O = 7,8-dihydroneopterin 2',3'-cyclic phosphate + formate + diphosphate + H(+). Its pathway is cofactor biosynthesis; 5,6,7,8-tetrahydromethanopterin biosynthesis. Converts GTP to 7,8-dihydro-D-neopterin 2',3'-cyclic phosphate, the first intermediate in the biosynthesis of coenzyme methanopterin. This Haloquadratum walsbyi (strain DSM 16790 / HBSQ001) protein is GTP cyclohydrolase MptA.